The following is a 643-amino-acid chain: Threonine--tRNA ligase (643 aa).

A TGS domain is found at 1-61; it reads MPIITLPDGS…EQDATLEIIT (61 aa). Positions 243–534 are catalytic; that stretch reads DHRKIGKALD…ITEEYAGFFP (292 aa). Residues C334, H385, and H511 each contribute to the Zn(2+) site.

The protein belongs to the class-II aminoacyl-tRNA synthetase family. As to quaternary structure, homodimer. It depends on Zn(2+) as a cofactor.

The protein resides in the cytoplasm. The enzyme catalyses tRNA(Thr) + L-threonine + ATP = L-threonyl-tRNA(Thr) + AMP + diphosphate + H(+). Its function is as follows. Catalyzes the attachment of threonine to tRNA(Thr) in a two-step reaction: L-threonine is first activated by ATP to form Thr-AMP and then transferred to the acceptor end of tRNA(Thr). Also edits incorrectly charged L-seryl-tRNA(Thr). In Haemophilus influenzae (strain PittGG), this protein is Threonine--tRNA ligase.